The primary structure comprises 182 residues: Bifunctional protein PyrR (182 aa).

The PRPP-binding signature appears at 99–111; the sequence is VVLVDDVLFTGRT.

Belongs to the purine/pyrimidine phosphoribosyltransferase family. PyrR subfamily.

It carries out the reaction UMP + diphosphate = 5-phospho-alpha-D-ribose 1-diphosphate + uracil. Its function is as follows. Regulates the transcription of the pyrimidine nucleotide (pyr) operon in response to exogenous pyrimidines. Also displays a weak uracil phosphoribosyltransferase activity which is not physiologically significant. In Chloroflexus aurantiacus (strain ATCC 29366 / DSM 635 / J-10-fl), this protein is Bifunctional protein PyrR.